A 154-amino-acid chain; its full sequence is Ascorbate-specific PTS system EIIA component (154 aa).

Residues 6–150 (SLAENNSIRL…QEVLDLIDRT (145 aa)) form the PTS EIIA type-2 domain. Catalysis depends on H68, which acts as the Tele-phosphohistidine intermediate. Residue H68 is modified to Phosphohistidine.

The protein localises to the cytoplasm. In terms of biological role, the phosphoenolpyruvate-dependent sugar phosphotransferase system (sugar PTS), a major carbohydrate active transport system, catalyzes the phosphorylation of incoming sugar substrates concomitantly with their translocation across the cell membrane. The enzyme II UlaABC PTS system is involved in ascorbate transport. The polypeptide is Ascorbate-specific PTS system EIIA component (ulaC) (Salmonella choleraesuis (strain SC-B67)).